The sequence spans 349 residues: Histone-lysine N-methyltransferase ATXR6 (349 aa).

Residues 1-28 are disordered; that stretch reads MVAVRRRRTQASNPRSEPPQHMSDHDSD. The PHD-type zinc-finger motif lies at 32 to 82; sequence DTVCEECSSGKQPAKLLLCDKCDKGFHLFCLRPILVSVPKGSWFCPSCSKH. Positions 92-99 match the PIP motif motif; sequence QTKIIDFF. Positions 105 to 126 are disordered; the sequence is PDSSQISSSSDSIGKKRKKTSL. Low complexity predominate over residues 106–116; sequence DSSQISSSSDS. Residue Met190 participates in substrate binding. One can recognise an SET domain in the interval 214–337; that stretch reads PPLMVVFDPY…KGERLYYDYN (124 aa). Residues 224–226 and 287–291 each bind S-adenosyl-L-methionine; these read EGF and RFISG. Substrate-binding positions include Arg309 and 339–340; that span reads YE. Residues Tyr343 and Val349 each contribute to the S-adenosyl-L-methionine site.

This sequence belongs to the class V-like SAM-binding methyltransferase superfamily. Histone-lysine methyltransferase family. TRX/MLL subfamily. In terms of assembly, interacts with PCNA1 and PCNA2. Interacts (via PHD domain) with HTR1 (via N-terminus). Interacts with IPS1. Expressed in leaves, roots, stems, flowers and siliques. Up-regulated in tissues where cell division is active.

It is found in the nucleus. The catalysed reaction is L-lysyl(27)-[histone H3] + S-adenosyl-L-methionine = N(6)-methyl-L-lysyl(27)-[histone H3] + S-adenosyl-L-homocysteine + H(+). Its function is as follows. Histone methyltransferase that specifically monomethylates 'Lys-27' of histone H3 (H3K27me1). Has higher activity on nucleosomes containing H3.1 than H3.3. Involved in the formation of constitutive heterochromatin and the silencing of heterochromatic elements. May act as a positive regulator of the G1-S transition. Influences which sets of rRNA gene variants are expressed or silenced. Up-regulated by E2FB. The polypeptide is Histone-lysine N-methyltransferase ATXR6 (ATXR6) (Arabidopsis thaliana (Mouse-ear cress)).